Consider the following 153-residue polypeptide: uncharacterized protein (153 aa).

This is an uncharacterized protein from Escherichia coli (strain K12).